Reading from the N-terminus, the 221-residue chain is Casparian strip membrane protein 3 (221 aa).

Positions 1–12 are enriched in basic and acidic residues; sequence MDIEKAASRREE. The interval 1-28 is disordered; the sequence is MDIEKAASRREEEEPIVQRPKLDKGKGK. Over 1–58 the chain is Cytoplasmic; the sequence is MDIEKAASRREEEEPIVQRPKLDKGKGKAHVFAPPMNYNRIMDKHKQEKVSAAGWKRG. Residues 59-79 form a helical membrane-spanning segment; that stretch reads VAIFDFVLRLIAAITAMAAAA. The Extracellular segment spans residues 80–109; it reads KMATTEETLPFFTQFLQFQAEYTDLPTMSS. Residues 110 to 130 form a helical membrane-spanning segment; the sequence is FVIVNSIVGGYLTLSLPFSIV. Over 131–148 the chain is Cytoplasmic; it reads CILRPLAVPPRLFLIICD. The chain crosses the membrane as a helical span at residues 149–169; sequence TAMMGLTMMAASASAAIVYLA. The Extracellular portion of the chain corresponds to 170-194; that stretch reads HNGNSSSNWLPVCQQFGDFCQGTSG. Asparagine 173 carries an N-linked (GlcNAc...) asparagine glycan. Residues 195-215 form a helical membrane-spanning segment; it reads AVVASFIAATLLMFLVILSAF. At 216–221 the chain is on the cytoplasmic side; it reads ALKRST.

The protein belongs to the Casparian strip membrane proteins (CASP) family. In terms of assembly, homodimer and heterodimers.

It localises to the cell membrane. In terms of biological role, regulates membrane-cell wall junctions and localized cell wall deposition. Required for establishment of the Casparian strip membrane domain (CSD) and the subsequent formation of Casparian strips, a cell wall modification of the root endodermis that determines an apoplastic barrier between the intraorganismal apoplasm and the extraorganismal apoplasm and prevents lateral diffusion. The polypeptide is Casparian strip membrane protein 3 (Arabidopsis lyrata subsp. lyrata (Lyre-leaved rock-cress)).